Here is a 521-residue protein sequence, read N- to C-terminus: Leucine-rich repeat-containing protein 24 (521 aa).

The first 23 residues, 1-23 (MALRAPTLLLLLLGLLLLPLLPG), serve as a signal peptide directing secretion. An LRRNT domain is found at 24–58 (LPPRATGCPAACRCYSATVECGALRLRVVPPGIPP). LRR repeat units lie at residues 59–80 (GTQT…SLAP), 83–104 (ALRH…AFRA), 107–128 (RLLE…AFVG), 131–152 (QLRV…TFLH), 155–176 (RLQE…ALAG), and 179–200 (SLAL…ALQP). N-linked (GlcNAc...) asparagine glycosylation is present at N91. The LRRCT domain occupies 212–267 (NPWRCDCALHWLGSWIKEGGRRLLSSRDKKITCAEPPRLALQSLLEVSGGSLICIP). In terms of domain architecture, Ig-like C2-type spans 268-371 (PSVNVEPPEF…ARVPFHLLVN (104 aa)). C289 and C353 form a disulfide bridge. A disordered region spans residues 306–330 (QPRDGKPQAQAQLEGGAPGLGGHGT). N-linked (GlcNAc...) asparagine glycosylation is found at N342 and N371. The tract at residues 374-395 (RQQSQQLPDPQAPATRPVGHEP) is disordered. A helical membrane pass occupies residues 414–434 (AITAAIALLALTALLLAAMIC).

The protein resides in the membrane. The chain is Leucine-rich repeat-containing protein 24 (Lrrc24) from Mus musculus (Mouse).